A 1067-amino-acid polypeptide reads, in one-letter code: Mediator of RNA polymerase II transcription subunit 5 (1067 aa).

Belongs to the Mediator complex subunit 5 family. In terms of assembly, component of the Mediator complex.

The protein resides in the nucleus. Component of the Mediator complex, a coactivator involved in the regulated transcription of nearly all RNA polymerase II-dependent genes. Mediator functions as a bridge to convey information from gene-specific regulatory proteins to the basal RNA polymerase II transcription machinery. Mediator is recruited to promoters by direct interactions with regulatory proteins and serves as a scaffold for the assembly of a functional preinitiation complex with RNA polymerase II and the general transcription factors. This chain is Mediator of RNA polymerase II transcription subunit 5 (NUT1), found in Kluyveromyces lactis (strain ATCC 8585 / CBS 2359 / DSM 70799 / NBRC 1267 / NRRL Y-1140 / WM37) (Yeast).